The primary structure comprises 497 residues: Probable cytosol aminopeptidase (497 aa).

Mn(2+) is bound by residues Lys263 and Asp268. Lys275 is a catalytic residue. Residues Asp286, Asp345, and Glu347 each contribute to the Mn(2+) site. Arg349 is an active-site residue.

It belongs to the peptidase M17 family. It depends on Mn(2+) as a cofactor.

Its subcellular location is the cytoplasm. The catalysed reaction is Release of an N-terminal amino acid, Xaa-|-Yaa-, in which Xaa is preferably Leu, but may be other amino acids including Pro although not Arg or Lys, and Yaa may be Pro. Amino acid amides and methyl esters are also readily hydrolyzed, but rates on arylamides are exceedingly low.. It carries out the reaction Release of an N-terminal amino acid, preferentially leucine, but not glutamic or aspartic acids.. Functionally, presumably involved in the processing and regular turnover of intracellular proteins. Catalyzes the removal of unsubstituted N-terminal amino acids from various peptides. The protein is Probable cytosol aminopeptidase of Rhizobium meliloti (strain 1021) (Ensifer meliloti).